The following is a 237-amino-acid chain: Protein CUSTOS (237 aa).

Disordered stretches follow at residues 1-23 (MAAP…LDRF), 50-69 (LRVR…TTPE), and 97-237 (ISKA…LGNE). Over residues 52-62 (VRPDCHEHDGN) the composition is skewed to basic and acidic residues. The span at 162-177 (STLQQEPQSTPSNVCD) shows a compositional bias: polar residues. The span at 181–190 (PKKKRKKKKK) shows a compositional bias: basic residues. The short motif at 182–190 (KKKRKKKKK) is the Nucleolar localization signal (NLS1) element. Basic and acidic residues-rich tracts occupy residues 203–216 (ETMH…ELQA) and 225–237 (KLEM…LGNE). A Nucleolar localization signal (NLS2) motif is present at residues 217 to 225 (KRKKKKKQK).

It belongs to the CUSTOS family. As to quaternary structure, interacts (via NLS1 and NLS2) with dvl2; the interaction is negatively regulated by Wnt stimulation. Interacts with csnk1a1. Interacts with ctnnb1; the interaction is positively regulated by Wnt stimulation. Phosphorylated by ck1/csnk1a1.

The protein localises to the nucleus envelope. In terms of biological role, essential for Spemann-Mangold organizer formation and subsequent anterior head development in the embryo. Inhibits canonical Wnt signaling pathway by antagonizing nuclear import of beta-catenin (ctnnb1) during embryogenesis. The chain is Protein CUSTOS from Xenopus laevis (African clawed frog).